Reading from the N-terminus, the 184-residue chain is GMP synthase [glutamine-hydrolyzing] subunit A (184 aa).

The Glutamine amidotransferase type-1 domain maps to 3-184; the sequence is PLYVVNNHGQ…FENFDGICSE (182 aa). The active-site Nucleophile is cysteine 75. Active-site residues include histidine 162 and glutamate 164.

In terms of assembly, heterodimer composed of a glutamine amidotransferase subunit (A) and a GMP-binding subunit (B).

It carries out the reaction XMP + L-glutamine + ATP + H2O = GMP + L-glutamate + AMP + diphosphate + 2 H(+). Its pathway is purine metabolism; GMP biosynthesis; GMP from XMP (L-Gln route): step 1/1. Functionally, catalyzes the synthesis of GMP from XMP. In Methanoculleus marisnigri (strain ATCC 35101 / DSM 1498 / JR1), this protein is GMP synthase [glutamine-hydrolyzing] subunit A.